We begin with the raw amino-acid sequence, 198 residues long: Putative NADH dehydrogenase/NAD(P)H nitroreductase XOO4267 (198 aa).

Belongs to the nitroreductase family. HadB/RutE subfamily. Requires FMN as cofactor.

The polypeptide is Putative NADH dehydrogenase/NAD(P)H nitroreductase XOO4267 (Xanthomonas oryzae pv. oryzae (strain KACC10331 / KXO85)).